Reading from the N-terminus, the 449-residue chain is Glucose-6-phosphate isomerase (449 aa).

The Proton donor role is filled by Glu-291. Residues His-312 and Lys-426 contribute to the active site.

Belongs to the GPI family.

The protein localises to the cytoplasm. It catalyses the reaction alpha-D-glucose 6-phosphate = beta-D-fructose 6-phosphate. Its pathway is carbohydrate biosynthesis; gluconeogenesis. The protein operates within carbohydrate degradation; glycolysis; D-glyceraldehyde 3-phosphate and glycerone phosphate from D-glucose: step 2/4. Catalyzes the reversible isomerization of glucose-6-phosphate to fructose-6-phosphate. This chain is Glucose-6-phosphate isomerase, found in Streptococcus pneumoniae serotype 4 (strain ATCC BAA-334 / TIGR4).